Reading from the N-terminus, the 427-residue chain is Trigger factor (427 aa).

The PPIase FKBP-type domain occupies glycine 163–proline 248.

The protein belongs to the FKBP-type PPIase family. Tig subfamily.

It localises to the cytoplasm. It carries out the reaction [protein]-peptidylproline (omega=180) = [protein]-peptidylproline (omega=0). In terms of biological role, involved in protein export. Acts as a chaperone by maintaining the newly synthesized protein in an open conformation. Functions as a peptidyl-prolyl cis-trans isomerase. The chain is Trigger factor from Streptococcus agalactiae serotype V (strain ATCC BAA-611 / 2603 V/R).